The chain runs to 547 residues: T-complex protein 1 subunit alpha (547 aa).

This sequence belongs to the TCP-1 chaperonin family. In terms of assembly, heterooligomeric complex of about 850 to 900 kDa that forms two stacked rings, 12 to 16 nm in diameter.

The protein localises to the cytoplasm. Its function is as follows. Molecular chaperone; assists the folding of proteins upon ATP hydrolysis. Known to play a role, in vitro, in the folding of actin and tubulin. The polypeptide is T-complex protein 1 subunit alpha (Tetrahymena pyriformis).